Consider the following 440-residue polypeptide: Ribosomal protein uS12 methylthiotransferase RimO (440 aa).

The 112-residue stretch at 5–116 (PTIAISHLGC…IVNVIERAEQ (112 aa)) folds into the MTTase N-terminal domain. Positions 14, 50, 79, 154, 158, and 161 each coordinate [4Fe-4S] cluster. The region spanning 140–370 (TTTEGVAYLR…ALQQPISWRK (231 aa)) is the Radical SAM core domain. One can recognise a TRAM domain in the interval 372 to 438 (QQEVGKTVEV…EYDLFGQVVS (67 aa)).

It belongs to the methylthiotransferase family. RimO subfamily. [4Fe-4S] cluster serves as cofactor.

It is found in the cytoplasm. It catalyses the reaction L-aspartate(89)-[ribosomal protein uS12]-hydrogen + (sulfur carrier)-SH + AH2 + 2 S-adenosyl-L-methionine = 3-methylsulfanyl-L-aspartate(89)-[ribosomal protein uS12]-hydrogen + (sulfur carrier)-H + 5'-deoxyadenosine + L-methionine + A + S-adenosyl-L-homocysteine + 2 H(+). In terms of biological role, catalyzes the methylthiolation of an aspartic acid residue of ribosomal protein uS12. The protein is Ribosomal protein uS12 methylthiotransferase RimO of Trichormus variabilis (strain ATCC 29413 / PCC 7937) (Anabaena variabilis).